A 131-amino-acid polypeptide reads, in one-letter code: 14.7 kDa heat shock protein (131 aa).

The segment covering 1–11 (MSRNMEVNAGS) has biased composition (polar residues). Positions 1-20 (MSRNMEVNAGSSGEIPSPIR) are disordered. Positions 22 to 131 (RFQKSGSQAV…INVKERILHY (110 aa)) constitute a sHSP domain.

This sequence belongs to the small heat shock protein (HSP20) family. In terms of assembly, may form oligomeric structures.

It is found in the cytoplasm. This is 14.7 kDa heat shock protein (HSP14.7) from Arabidopsis thaliana (Mouse-ear cress).